The primary structure comprises 1026 residues: Multidrug resistance protein MdtC (1026 aa).

11 helical membrane passes run 15-35 (ILIAAAITLCGILGFRLLPVA), 333-353 (EVEETLAISVALVILVVFLFL), 360-380 (LIPAVAVPVSLIGTFAAMYLC), 387-407 (LSLMALTIATGFVVDDAIVVL), 431-451 (VGFTVISMSLSLVAVFLPLLL), 463-483 (FAVTLSVAIGISLVVSLTLTP), 528-548 (LVGVVFLGTVALNIWLYIAIP), 853-873 (LILIVAAIATVYIVLGILYES), 897-917 (LFNAPFSLIALIGIMLLIGIV), 953-973 (PIMMTTLAALFGALPLVLSGG), and 984-1004 (ITIVGGLVMSQLLTLYTTPVV).

It belongs to the resistance-nodulation-cell division (RND) (TC 2.A.6) family. MdtC subfamily. As to quaternary structure, part of a tripartite efflux system composed of MdtA, MdtB and MdtC. MdtC forms a heteromultimer with MdtB.

It localises to the cell inner membrane. This chain is Multidrug resistance protein MdtC, found in Salmonella agona (strain SL483).